Consider the following 718-residue polypeptide: Exostosin-2 (718 aa).

Topologically, residues 1-25 (MCASVKYNIRGPALIPRMKTKHRIY) are cytoplasmic. A helical; Signal-anchor for type II membrane protein membrane pass occupies residues 26 to 46 (YITLFSIVLLGLIATGMFQFW). Over 47 to 718 (PHSIESSNDW…LKSFPNIGSL (672 aa)) the chain is Lumenal. 4 cysteine pairs are disulfide-bonded: cysteine 85-cysteine 90, cysteine 96-cysteine 151, cysteine 286-cysteine 300, and cysteine 318-cysteine 339. N-linked (GlcNAc...) asparagine glycosylation occurs at asparagine 288. Residues leucine 461, arginine 465, asparagine 490, and asparagine 517 each contribute to the UDP site. The UDP-N-acetyl-alpha-D-glucosamine site is built by arginine 465, asparagine 490, asparagine 517, arginine 522, aspartate 538, aspartate 539, and aspartate 540. The UDP site is built by aspartate 538 and aspartate 539. Aspartate 540 serves as a coordination point for Mn(2+). A protein is bound by residues tyrosine 582 and serine 584. Cysteine 626 and cysteine 676 are joined by a disulfide. The UDP-N-acetyl-alpha-D-glucosamine site is built by glutamate 627 and aspartate 628. Residue asparagine 637 is glycosylated (N-linked (GlcNAc...) asparagine). Residues lysine 651 and lysine 653 each coordinate a protein. UDP-N-acetyl-alpha-D-glucosamine is bound at residue arginine 673.

The protein belongs to the glycosyltransferase 47 family. As to quaternary structure, part of the heparan sulfate polymerase, a dimeric complex composed of EXT1 and EXT2. Could also form homooligomeric complexes. Interacts with NDST1. Interacts with GALNT5. It depends on Mn(2+) as a cofactor. In terms of processing, N-glycosylated at Asn-637. A soluble form is generated by proteolytic processing. In terms of tissue distribution, widely expressed.

It is found in the golgi apparatus membrane. The protein localises to the golgi apparatus. The protein resides in the cis-Golgi network membrane. Its subcellular location is the endoplasmic reticulum membrane. It localises to the secreted. It catalyses the reaction 3-O-{[(1-&gt;4)-beta-D-GlcA-(1-&gt;4)-alpha-D-GlcNAc](n)-(1-&gt;4)-beta-D-GlcA-(1-&gt;3)-beta-D-Gal-(1-&gt;3)-beta-D-Gal-(1-&gt;4)-beta-D-Xyl}-L-seryl-[protein] + UDP-N-acetyl-alpha-D-glucosamine = 3-O-{alpha-D-GlcNAc-[(1-&gt;4)-beta-D-GlcA-(1-&gt;4)-alpha-D-GlcNAc](n)-(1-&gt;4)-beta-D-GlcA-(1-&gt;3)-beta-D-Gal-(1-&gt;3)-beta-D-Gal-(1-&gt;4)-beta-D-Xyl}-L-seryl-[protein] + UDP + H(+). Its pathway is protein modification; protein glycosylation. Glycosyltransferase forming with EXT1 the heterodimeric heparan sulfate polymerase which catalyzes the elongation of the heparan sulfate glycan backbone. Glycan backbone extension consists in the alternating transfer of (1-&gt;4)-beta-D-GlcA and (1-&gt;4)-alpha-D-GlcNAc residues from their respective UDP-sugar donors. Both EXT1 and EXT2 are required for the full activity of the polymerase since EXT1 bears the N-acetylglucosaminyl-proteoglycan 4-beta-glucuronosyltransferase activity within the complex while EXT2 carries the glucuronosyl-N-acetylglucosaminyl-proteoglycan 4-alpha-N-acetylglucosaminyltransferase activity. Heparan sulfate proteoglycans are ubiquitous components of the extracellular matrix and play an important role in tissue homeostasis and signaling. This is Exostosin-2 from Homo sapiens (Human).